The following is a 216-amino-acid chain: Minor fimbrial subunit HifD (216 aa).

The N-terminal stretch at 1–19 (MQKTPKKLTALCHQQSTAS) is a signal peptide. Cysteine 20 is lipidated: N-palmitoyl cysteine. Cysteine 20 carries the S-diacylglycerol cysteine lipid modification. The interval 159–180 (PINVDGSQANSEKAPDTGKEQN) is disordered.

The protein belongs to the fimbrial protein family.

It is found in the cell membrane. The protein localises to the fimbrium. In terms of biological role, may be a minor structural protein required for pilus biogenesis. The chain is Minor fimbrial subunit HifD (hifD) from Haemophilus influenzae.